Consider the following 55-residue polypeptide: Large ribosomal subunit protein bL33 (55 aa).

This sequence belongs to the bacterial ribosomal protein bL33 family.

This Acidothermus cellulolyticus (strain ATCC 43068 / DSM 8971 / 11B) protein is Large ribosomal subunit protein bL33.